The following is a 256-amino-acid chain: Putative ankyrin repeat protein FPV231 (256 aa).

ANK repeat units follow at residues 1 to 20 (MFGN…RIDS), 24 to 53 (EECL…DTNI), 57 to 86 (YNRS…DYNL), 90 to 119 (HGYT…DPNI), and 123 to 151 (EKHT…DINI).

The sequence is that of Putative ankyrin repeat protein FPV231 from Vertebrata (FPV).